Consider the following 471-residue polypeptide: Proline--tRNA ligase 2 (471 aa).

It belongs to the class-II aminoacyl-tRNA synthetase family. ProS type 3 subfamily. In terms of assembly, homodimer.

The protein localises to the cytoplasm. It catalyses the reaction tRNA(Pro) + L-proline + ATP = L-prolyl-tRNA(Pro) + AMP + diphosphate. Functionally, catalyzes the attachment of proline to tRNA(Pro) in a two-step reaction: proline is first activated by ATP to form Pro-AMP and then transferred to the acceptor end of tRNA(Pro). The protein is Proline--tRNA ligase 2 of Streptomyces avermitilis (strain ATCC 31267 / DSM 46492 / JCM 5070 / NBRC 14893 / NCIMB 12804 / NRRL 8165 / MA-4680).